Reading from the N-terminus, the 952-residue chain is MTDETAHPTQSASKQESAALKQTGDDQQESQQQRGYTNYNNGSNYTQKKPYNSNRPHQQRGGKFGPNRYNNRGNYNGGGSFRGGHMGANSSNVPWTGYYNNYPVYYQPQQMAAAGSAPANPIPVEEKSPVPTKIEITTKSGEHLDLKEQHKAKLQSQERSTVSPQPESKLKETSDSTSTSTPTPTPSTNDSKASSEENISEAEKTRRNFIEQVKLRKAALEKKRKEQLEGSSGNNNIPMKTTPENVEEKGSDKPEVTEKTKPAEEKSAEPEVKQETPAEEGEQGEKGQIKEESTPKVLTFAERLKLKKQQKEREEKTEGKENKEVPVQEETKSAIESAPVPPSEQVKEETEVAETEQSNIDESATTPAIPTKSDEAEAEVEAEAGDAGTKIGLEAEIETTTDETDDGTNTVSHILNVLKDATPIEDVFSFNYPEGIEGPDIKYKKEHVKYTYGPTFLLQFKDKLNVKADAEWVQSTASKIVIPPGMGRGNRSRDSGRFGNNSSRGHDFRNTSVRNMDDRANSRTSSKRRSKRMNDDRRSNRSYTSRRDRERGSYRNEEKREDDKPKEEVAPLVPSANRWVPKFKSKKTEKKLAPDGKTELLDKDEVERKMKSLLNKLTLEMFDAISSEILAIANISVWETNGETLKAVIEQIFLKACDEPHWSSMYAQLCGKVVKELNPDITDETNEGKTGPKLVLHYLVARCHAEFDKGWTDKLPTNEDGTPLEPEMMSEEYYAAASAKRRGLGLVRFIGFLYRLNLLTGKMMFECFRRLMKDLTDSPSEETLESVVELLNTVGEQFETDSFRTGQATLEGSQLLDSLFGILDNIIQTAKISSRIKFKLIDIKELRHDKNWNSDKKDNGPKTIQQIHEEEERQRQLKNNSRSNSRRTNNSSNRHSFRRDAPPASKDSFITTRTYSQRNSQRAPPPKEEPAAPTSTATNMFSALMGESDDEE.

Disordered stretches follow at residues 1 to 77, 115 to 389, and 481 to 575; these read MTDE…NYNG, GSAP…DAGT, and VIPP…LVPS. Residues 7–16 are compositionally biased toward polar residues; the sequence is HPTQSASKQE. A compositionally biased stretch (low complexity) spans 29 to 46; that stretch reads ESQQQRGYTNYNNGSNYT. The span at 47–56 shows a compositional bias: polar residues; it reads QKKPYNSNRP. Positions 65-74 are enriched in low complexity; that stretch reads GPNRYNNRGN. A compositionally biased stretch (basic and acidic residues) spans 140–151; that stretch reads SGEHLDLKEQHK. Residues 154-166 show a composition bias toward polar residues; sequence LQSQERSTVSPQP. S163 carries the phosphoserine modification. Low complexity predominate over residues 175 to 191; the sequence is DSTSTSTPTPTPSTNDS. T181 carries the post-translational modification Phosphothreonine. Positions 188–299 are interaction with PAB1; sequence TNDSKASSEE…KEESTPKVLT (112 aa). At S195 the chain carries Phosphoserine. The span at 218–228 shows a compositional bias: basic and acidic residues; the sequence is AALEKKRKEQL. Polar residues predominate over residues 229–244; the sequence is EGSSGNNNIPMKTTPE. 3 stretches are compositionally biased toward basic and acidic residues: residues 246–276, 283–294, and 309–333; these read VEEK…KQET, QGEKGQIKEEST, and QQKE…ETKS. Polar residues predominate over residues 355–368; the sequence is TEQSNIDESATTPA. A Phosphoserine modification is found at S503. 2 stretches are compositionally biased toward basic and acidic residues: residues 504–521 and 532–569; these read RGHD…DRAN and RMND…KEEV. An MIF4G domain is found at 607–850; it reads ERKMKSLLNK…IDIKELRHDK (244 aa). The disordered stretch occupies residues 870–952; that stretch reads EEERQRQLKN…ALMGESDDEE (83 aa). Residues 879–894 show a composition bias toward low complexity; that stretch reads NNSRSNSRRTNNSSNR. Residue S883 is modified to Phosphoserine. Residue T888 is modified to Phosphothreonine. Phosphoserine occurs at positions 892, 896, 908, and 948. A compositionally biased stretch (polar residues) spans 908-922; sequence SFITTRTYSQRNSQR.

The protein belongs to the eukaryotic initiation factor 4G family. In terms of assembly, component of the eIF4F complex, which composition varies with external and internal environmental conditions. It is composed of at least eIF4A (TIF1/TIF2), eIF4E (TIF45) and eIF4G (TIF4631 or TIF4632). Interacts with PAT1 in a RNA-dependent manner.

It localises to the cytoplasm. The protein localises to the P-body. It is found in the stress granule. In terms of biological role, component of the eIF4F complex, which interacts with the mRNA cap structure and serves as an initial point of assembly for the translation apparatus. Stimulates translation by interaction with polyadenylate-binding protein PAB1, bringing the 5'- and 3'-ends of the mRNA in proximity. The formation of this circular mRNP structure appears to be critical for the synergistic effects of the cap and the poly(A) tail in facilitating translation initiation, recycling of ribosomes, and mRNA stability. TIF4631 is probably essential when TIF4632 is missing. The sequence is that of Eukaryotic initiation factor 4F subunit p150 from Saccharomyces cerevisiae (strain ATCC 204508 / S288c) (Baker's yeast).